A 186-amino-acid polypeptide reads, in one-letter code: Ribosome-recycling factor (186 aa).

Residues 135–164 form a disordered region; the sequence is DGMDDLKKAEKDGEIGQDESRAQSERVQKM.

The protein belongs to the RRF family.

It localises to the cytoplasm. Its function is as follows. Responsible for the release of ribosomes from messenger RNA at the termination of protein biosynthesis. May increase the efficiency of translation by recycling ribosomes from one round of translation to another. The sequence is that of Ribosome-recycling factor from Sinorhizobium medicae (strain WSM419) (Ensifer medicae).